The following is a 219-amino-acid chain: Small ribosomal subunit protein uS3 (219 aa).

The KH type-2 domain maps to 38-106; sequence IREYITARLK…RVHINILEVK (69 aa).

Belongs to the universal ribosomal protein uS3 family. Part of the 30S ribosomal subunit. Forms a tight complex with proteins S10 and S14.

Functionally, binds the lower part of the 30S subunit head. Binds mRNA in the 70S ribosome, positioning it for translation. The sequence is that of Small ribosomal subunit protein uS3 from Bacillus cytotoxicus (strain DSM 22905 / CIP 110041 / 391-98 / NVH 391-98).